Here is a 391-residue protein sequence, read N- to C-terminus: MPGPQGGRGAATMSLGKLSPVGWVSSSQGKRRLTADMISHPLGDFRHTMHVGRGGDVFGDTSFLSNHGGSSGSTHRSPRSFLAKKLQLVRRVGAPPRRMASPPAPSPAPPAISPIIKNAISLPQLNQAAYDSLVVGKLSFDSSPTSSTDGHSSYGLDSGFCTISRLPRSEKPHDRDRDGSFPSEPGLRRSDSLLSFRLDLDLGPSLLSELLGVMSLPEAPAAETPAPAANPPAPTANPTGPAANPPATTANPPAPAANPSAPAATPTGPAANPPAPAASSTPHGHCPNGVTAGLGPVAEVKSSPVGGGPRGPAGPALGRHWGAGWDGGHHYPEMDARQERVEVLPQARASWESLDEEWRAPQAGSRTPVPSTVQANTFEFADAEEDDEVKV.

Phosphoserine is present on residues S19 and S27. T34 carries the phosphothreonine modification. One can recognise a CRIB domain in the interval 38–52 (ISHPLGDFRHTMHVG). S39 bears the Phosphoserine mark. R53 is subject to Omega-N-methylarginine. S65, S73, S77, S101, S113, S121, and S139 each carry phosphoserine. Positions 163–189 (ISRLPRSEKPHDRDRDGSFPSEPGLRR) are disordered. The segment covering 167-179 (PRSEKPHDRDRDG) has biased composition (basic and acidic residues). Phosphoserine is present on residues S180, S190, S192, and S195. 8 consecutive repeat copies span residues 220-226 (PAAETPA), 227-233 (PAANPPA), 234-240 (PTANPTG), 241-247 (PAANPPA), 248-254 (TTANPPA), 255-261 (PAANPSA), 262-268 (PAATPTG), and 269-275 (PAANPPA). Residues 220-275 (PAAETPAPAANPPAPTANPTGPAANPPATTANPPAPAANPSAPAATPTGPAANPPA) are 8 X 7 AA tandem repeats of [PT]-[AT]-A-[ENT]-[PT]-[PTS]-[AG]. Residues 221-338 (AAETPAPAAN…HHYPEMDARQ (118 aa)) are disordered. Low complexity predominate over residues 236–270 (ANPTGPAANPPATTANPPAPAANPSAPAATPTGPA). S303 carries the phosphoserine modification. Residues 327–338 (GGHHYPEMDARQ) show a composition bias toward basic and acidic residues. Phosphoserine is present on residues S350 and S353. The disordered stretch occupies residues 354 to 391 (LDEEWRAPQAGSRTPVPSTVQANTFEFADAEEDDEVKV). A compositionally biased stretch (polar residues) spans 364–377 (GSRTPVPSTVQANT). Residues 381-391 (ADAEEDDEVKV) show a composition bias toward acidic residues.

Belongs to the BORG/CEP family. Interacts with RHOQ and CDC42, in a GTP-dependent manner. As to expression, endothelial and bone marrow stromal cells.

The protein localises to the endomembrane system. It is found in the cytoplasm. Its subcellular location is the cytoskeleton. Probably involved in the organization of the actin cytoskeleton. Induced membrane extensions in fibroblasts. The polypeptide is Cdc42 effector protein 1 (CDC42EP1) (Homo sapiens (Human)).